The following is an 882-amino-acid chain: Translation initiation factor IF-2 (882 aa).

A disordered region spans residues 28–294 (GIRKSADDSV…SSLQQGFQKP (267 aa)). The segment covering 67-81 (STLNIPGTGGKSKSV) has biased composition (polar residues). A compositionally biased stretch (basic and acidic residues) spans 92-209 (VKRDPQEAER…RMAEENKWTD (118 aa)). Residues 244-258 (GRGRNAKAARPKKGN) are compositionally biased toward basic residues. Basic and acidic residues predominate over residues 259-272 (KHAESKADREEARA). The tr-type G domain occupies 381 to 550 (PRAPVVTIMG…LLQAEVLELK (170 aa)). Residues 390–397 (GHVDHGKT) are G1. GTP is bound at residue 390–397 (GHVDHGKT). Residues 415–419 (GITQH) are G2. Residues 436-439 (DTPG) are G3. GTP is bound by residues 436 to 440 (DTPGH) and 490 to 493 (NKID). Positions 490-493 (NKID) are G4. The segment at 526-528 (SAK) is G5. Residue Lys800 is modified to N6-acetyllysine.

It belongs to the TRAFAC class translation factor GTPase superfamily. Classic translation factor GTPase family. IF-2 subfamily.

The protein resides in the cytoplasm. One of the essential components for the initiation of protein synthesis. Protects formylmethionyl-tRNA from spontaneous hydrolysis and promotes its binding to the 30S ribosomal subunits. Also involved in the hydrolysis of GTP during the formation of the 70S ribosomal complex. This is Translation initiation factor IF-2 from Shigella flexneri serotype 5b (strain 8401).